A 263-amino-acid polypeptide reads, in one-letter code: Putative ankyrin repeat domain-containing protein 20A12 pseudogene (263 aa).

2 coiled-coil regions span residues 65–121 and 171–263; these read KKDL…MLES and NQVF…IQLH.

This is Putative ankyrin repeat domain-containing protein 20A12 pseudogene from Homo sapiens (Human).